A 152-amino-acid polypeptide reads, in one-letter code: uncharacterized protein (152 aa).

This is an uncharacterized protein from Brachyspira hyodysenteriae (Treponema hyodysenteriae).